A 554-amino-acid polypeptide reads, in one-letter code: Perforin-1 (554 aa).

The first 20 residues, 1–20 (MAAYLFLLGLFLLLPRPVPA), serve as a signal peptide directing secretion. Disulfide bonds link Cys-22-Cys-75, Cys-30-Cys-72, and Cys-101-Cys-175. Residues 26 to 374 (TRSECKQNHK…HYVMSRARWR (349 aa)) enclose the MACPF domain. A beta stranded transmembrane segment spans residues 128-148 (WRAGLDVNPKPEANVHVSVAG). A glycan (N-linked (GlcNAc...) asparagine) is linked at Asn-204. Cystine bridges form between Cys-241–Cys-407, Cys-376–Cys-392, Cys-380–Cys-394, and Cys-396–Cys-406. The beta stranded transmembrane segment at 256-278 (CLSVEAQVSIGAQASVSSEYKAC) threads the bilayer. Residues 375–407 (DCNRPCRAGQHKSSRDSCQCVCQDSNVTNQDCC) enclose the EGF-like domain. Residues 395–513 (VCQDSNVTNQ…FHEVNCPLNH (119 aa)) form the C2 domain. The N-linked (GlcNAc...) asparagine glycan is linked to Asn-400. Ca(2+) is bound by residues Gly-428, Asp-429, Thr-432, Asp-435, Asn-454, Asp-483, Ala-484, Asp-485, Trp-488, Asp-489, Asp-490, and Asp-491. Cystine bridges form between Cys-496–Cys-509 and Cys-524–Cys-533. Residue Asn-548 is glycosylated (N-linked (GlcNAc...) asparagine).

It belongs to the complement C6/C7/C8/C9 family. In terms of assembly, monomer, as soluble protein. Homooligomer; homooligomerizes to form a pore-forming ring. Ca(2+) serves as cofactor. N-glycosylated. Detected in large granular lymphocytes and lymphokine-activated killer cells.

The protein resides in the cytolytic granule. It localises to the secreted. Its subcellular location is the cell membrane. It is found in the endosome lumen. Pore-forming protein that plays a key role in granzyme-mediated programmed cell death, and in defense against virus-infected or neoplastic cells. Can insert into the membrane of target cells in its calcium-bound form, oligomerize and form large pores. Promotes cytolysis and apoptosis of target cells by mediating the passage and uptake of cytotoxic granzymes. Facilitates the delivery of cationic cargo protein, while anionic or neural proteins are not delivered efficiently. Perforin pores allow the release of mature caspase-7 (CASP7) into the extracellular milieu. The protein is Perforin-1 (Prf1) of Rattus norvegicus (Rat).